The sequence spans 87 residues: HssA/B-like protein 8 (87 aa).

Residues 1–22 are compositionally biased toward polar residues; that stretch reads MSILSALTSISNPMKSTKSSVA. A disordered region spans residues 1-24; the sequence is MSILSALTSISNPMKSTKSSVANG.

The protein belongs to the hssA/B family.

The sequence is that of HssA/B-like protein 8 (hssl8) from Dictyostelium discoideum (Social amoeba).